The primary structure comprises 144 residues: MAPKKKKVTGLIKLQIQAGQANPAPPVGPALGAHGVNIMEFCKAYNAATENQRGNVVPVEITVYEDRSFDFKLKTPPAAKLLLKAAGLQKGSGVPHTNKVGKVTMDQIREIAETKKEDLNARDIDAAAKIIAGTARSMGITVEG.

Belongs to the universal ribosomal protein uL11 family. As to quaternary structure, part of the ribosomal stalk of the 50S ribosomal subunit. Interacts with L10 and the large rRNA to form the base of the stalk. L10 forms an elongated spine to which L12 dimers bind in a sequential fashion forming a multimeric L10(L12)X complex. Post-translationally, one or more lysine residues are methylated.

Functionally, forms part of the ribosomal stalk which helps the ribosome interact with GTP-bound translation factors. In Corynebacterium efficiens (strain DSM 44549 / YS-314 / AJ 12310 / JCM 11189 / NBRC 100395), this protein is Large ribosomal subunit protein uL11.